Reading from the N-terminus, the 763-residue chain is 5-methyltetrahydropteroyltriglutamate--homocysteine methyltransferase (763 aa).

Residues 16-19 (RELK) and K114 contribute to the 5-methyltetrahydropteroyltri-L-glutamate site. Residues 438-440 (IGS) and E491 each bind L-homocysteine. L-methionine is bound by residues 438-440 (IGS) and E491. Residues 522–523 (RC) and W568 contribute to the 5-methyltetrahydropteroyltri-L-glutamate site. D606 serves as a coordination point for L-homocysteine. D606 provides a ligand contact to L-methionine. Residue E612 participates in 5-methyltetrahydropteroyltri-L-glutamate binding. Zn(2+) is bound by residues H648, C650, and E672. H701 acts as the Proton donor in catalysis. C733 is a binding site for Zn(2+).

It belongs to the vitamin-B12 independent methionine synthase family. Zn(2+) serves as cofactor.

The enzyme catalyses 5-methyltetrahydropteroyltri-L-glutamate + L-homocysteine = tetrahydropteroyltri-L-glutamate + L-methionine. Its pathway is amino-acid biosynthesis; L-methionine biosynthesis via de novo pathway; L-methionine from L-homocysteine (MetE route): step 1/1. In terms of biological role, catalyzes the transfer of a methyl group from 5-methyltetrahydrofolate to homocysteine resulting in methionine formation. This is 5-methyltetrahydropteroyltriglutamate--homocysteine methyltransferase from Parvibaculum lavamentivorans (strain DS-1 / DSM 13023 / NCIMB 13966).